The sequence spans 406 residues: Peptidase T (406 aa).

His78 is a Zn(2+) binding site. Residue Asp80 is part of the active site. A Zn(2+)-binding site is contributed by Asp139. Glu173 (proton acceptor) is an active-site residue. Positions 174, 196, and 378 each coordinate Zn(2+).

It belongs to the peptidase M20B family. Zn(2+) is required as a cofactor.

It is found in the cytoplasm. It carries out the reaction Release of the N-terminal residue from a tripeptide.. Functionally, cleaves the N-terminal amino acid of tripeptides. In Clostridium perfringens (strain SM101 / Type A), this protein is Peptidase T.